Here is a 105-residue protein sequence, read N- to C-terminus: Intermembrane phospholipid transport system binding protein MlaB (105 aa).

The region spanning 4–105 is the STAS domain; that stretch reads WDLQKNNDKI…GLSDWIANFI (102 aa).

The complex is composed of two ATP-binding proteins (MlaF), two transmembrane proteins (MlaE), two cytoplasmic solute-binding proteins (MlaB) and six periplasmic solute-binding proteins (MlaD).

It localises to the cytoplasm. Part of the ABC transporter complex MlaFEDB, which is involved in a phospholipid transport pathway that maintains lipid asymmetry in the outer membrane by retrograde trafficking of phospholipids from the outer membrane to the inner membrane. MlaB plays critical roles in both the assembly and activity of the complex. May act by modulating MlaF structure and stability. The polypeptide is Intermembrane phospholipid transport system binding protein MlaB (Haemophilus influenzae (strain ATCC 51907 / DSM 11121 / KW20 / Rd)).